Here is a 330-residue protein sequence, read N- to C-terminus: Holliday junction branch migration complex subunit RuvB (330 aa).

The interval 1–181 (MEDRLVGCRL…FGVINKLELY (181 aa)) is large ATPase domain (RuvB-L). ATP-binding positions include leucine 20, arginine 21, glycine 62, lysine 65, threonine 66, threonine 67, 128–130 (EDY), arginine 171, tyrosine 181, and arginine 218. Threonine 66 serves as a coordination point for Mg(2+). Positions 182-252 (SVEELGQIVK…IARTGLEALE (71 aa)) are small ATPAse domain (RuvB-S). Positions 255 to 330 (EIGLDAVDRN…AYEHFGLKYE (76 aa)) are head domain (RuvB-H). Positions 310 and 315 each coordinate DNA.

The protein belongs to the RuvB family. In terms of assembly, homohexamer. Forms an RuvA(8)-RuvB(12)-Holliday junction (HJ) complex. HJ DNA is sandwiched between 2 RuvA tetramers; dsDNA enters through RuvA and exits via RuvB. An RuvB hexamer assembles on each DNA strand where it exits the tetramer. Each RuvB hexamer is contacted by two RuvA subunits (via domain III) on 2 adjacent RuvB subunits; this complex drives branch migration. In the full resolvosome a probable DNA-RuvA(4)-RuvB(12)-RuvC(2) complex forms which resolves the HJ.

Its subcellular location is the cytoplasm. It catalyses the reaction ATP + H2O = ADP + phosphate + H(+). The RuvA-RuvB-RuvC complex processes Holliday junction (HJ) DNA during genetic recombination and DNA repair, while the RuvA-RuvB complex plays an important role in the rescue of blocked DNA replication forks via replication fork reversal (RFR). RuvA specifically binds to HJ cruciform DNA, conferring on it an open structure. The RuvB hexamer acts as an ATP-dependent pump, pulling dsDNA into and through the RuvAB complex. RuvB forms 2 homohexamers on either side of HJ DNA bound by 1 or 2 RuvA tetramers; 4 subunits per hexamer contact DNA at a time. Coordinated motions by a converter formed by DNA-disengaged RuvB subunits stimulates ATP hydrolysis and nucleotide exchange. Immobilization of the converter enables RuvB to convert the ATP-contained energy into a lever motion, pulling 2 nucleotides of DNA out of the RuvA tetramer per ATP hydrolyzed, thus driving DNA branch migration. The RuvB motors rotate together with the DNA substrate, which together with the progressing nucleotide cycle form the mechanistic basis for DNA recombination by continuous HJ branch migration. Branch migration allows RuvC to scan DNA until it finds its consensus sequence, where it cleaves and resolves cruciform DNA. This Acetivibrio thermocellus (strain ATCC 27405 / DSM 1237 / JCM 9322 / NBRC 103400 / NCIMB 10682 / NRRL B-4536 / VPI 7372) (Clostridium thermocellum) protein is Holliday junction branch migration complex subunit RuvB.